The sequence spans 264 residues: 3-methyl-2-oxobutanoate hydroxymethyltransferase (264 aa).

Residues Asp-45 and Asp-84 each coordinate Mg(2+). 3-methyl-2-oxobutanoate is bound by residues 45–46, Asp-84, and Lys-112; that span reads DS. Glu-114 is a binding site for Mg(2+). Glu-181 (proton acceptor) is an active-site residue.

Belongs to the PanB family. In terms of assembly, homodecamer; pentamer of dimers. Mg(2+) serves as cofactor.

Its subcellular location is the cytoplasm. It carries out the reaction 3-methyl-2-oxobutanoate + (6R)-5,10-methylene-5,6,7,8-tetrahydrofolate + H2O = 2-dehydropantoate + (6S)-5,6,7,8-tetrahydrofolate. It functions in the pathway cofactor biosynthesis; (R)-pantothenate biosynthesis; (R)-pantoate from 3-methyl-2-oxobutanoate: step 1/2. In terms of biological role, catalyzes the reversible reaction in which hydroxymethyl group from 5,10-methylenetetrahydrofolate is transferred onto alpha-ketoisovalerate to form ketopantoate. The chain is 3-methyl-2-oxobutanoate hydroxymethyltransferase from Escherichia coli O81 (strain ED1a).